Reading from the N-terminus, the 349-residue chain is Lipoyl synthase (349 aa).

The [4Fe-4S] cluster site is built by cysteine 55, cysteine 60, cysteine 66, cysteine 81, cysteine 85, cysteine 88, and serine 292. A Radical SAM core domain is found at 67–281 (WESREATFLI…ADFARELGFG (215 aa)).

Belongs to the radical SAM superfamily. Lipoyl synthase family. [4Fe-4S] cluster is required as a cofactor.

Its subcellular location is the cytoplasm. The enzyme catalyses [[Fe-S] cluster scaffold protein carrying a second [4Fe-4S](2+) cluster] + N(6)-octanoyl-L-lysyl-[protein] + 2 oxidized [2Fe-2S]-[ferredoxin] + 2 S-adenosyl-L-methionine + 4 H(+) = [[Fe-S] cluster scaffold protein] + N(6)-[(R)-dihydrolipoyl]-L-lysyl-[protein] + 4 Fe(3+) + 2 hydrogen sulfide + 2 5'-deoxyadenosine + 2 L-methionine + 2 reduced [2Fe-2S]-[ferredoxin]. It participates in protein modification; protein lipoylation via endogenous pathway; protein N(6)-(lipoyl)lysine from octanoyl-[acyl-carrier-protein]: step 2/2. Its function is as follows. Catalyzes the radical-mediated insertion of two sulfur atoms into the C-6 and C-8 positions of the octanoyl moiety bound to the lipoyl domains of lipoate-dependent enzymes, thereby converting the octanoylated domains into lipoylated derivatives. This Corynebacterium diphtheriae (strain ATCC 700971 / NCTC 13129 / Biotype gravis) protein is Lipoyl synthase.